The sequence spans 449 residues: Naphthalene 1,2-dioxygenase system, large oxygenase component (449 aa).

One can recognise a Rieske domain in the interval Trp39–Glu137. The [2Fe-2S] cluster site is built by Cys81, His83, Cys101, and His104. Fe cation contacts are provided by His208, His213, and Asp362.

The protein belongs to the bacterial ring-hydroxylating dioxygenase alpha subunit family. The naphthalene dioxygenase (NDO) multicomponent enzyme system is composed of an electron transfer component and a dioxygenase component (iron sulfur protein (ISP)). The electron transfer component is composed of a ferredoxin reductase (NdoR) and a ferredoxin (NdoA), and the dioxygenase component is formed of a heterohexamer (trimer of heterodimers) of three large alpha subunits (NdoB) and three small beta subunits (NdoC). The cofactor is [2Fe-2S] cluster. Requires Fe(2+) as cofactor.

The catalysed reaction is naphthalene + NADH + O2 + H(+) = (1R,2S)-1,2-dihydronaphthalene-1,2-diol + NAD(+). The protein operates within aromatic compound metabolism; naphthalene degradation. Component of the naphthalene dioxygenase (NDO) multicomponent enzyme system which catalyzes the incorporation of both atoms of molecular oxygen into naphthalene to form cis-(1R,2S)-dihydroxy-1,2-dihydronaphthalene. The alpha subunit has a catalytic role in the holoenzyme. Also able to catalyze the cis-dihydroxylation of biphenyl and phenanthrene. The polypeptide is Naphthalene 1,2-dioxygenase system, large oxygenase component (Pseudomonas putida (Arthrobacter siderocapsulatus)).